The chain runs to 501 residues: ATP synthase subunit alpha (501 aa).

169 to 176 (GDRQTGKT) is an ATP binding site.

It belongs to the ATPase alpha/beta chains family. F-type ATPases have 2 components, CF(1) - the catalytic core - and CF(0) - the membrane proton channel. CF(1) has five subunits: alpha(3), beta(3), gamma(1), delta(1), epsilon(1). CF(0) has three main subunits: a(1), b(2) and c(9-12). The alpha and beta chains form an alternating ring which encloses part of the gamma chain. CF(1) is attached to CF(0) by a central stalk formed by the gamma and epsilon chains, while a peripheral stalk is formed by the delta and b chains.

It localises to the cell inner membrane. It carries out the reaction ATP + H2O + 4 H(+)(in) = ADP + phosphate + 5 H(+)(out). Functionally, produces ATP from ADP in the presence of a proton gradient across the membrane. The alpha chain is a regulatory subunit. The chain is ATP synthase subunit alpha from Campylobacter lari (strain RM2100 / D67 / ATCC BAA-1060).